The following is a 206-amino-acid chain: dITP/XTP pyrophosphatase (206 aa).

7–12 (SSHGYK) serves as a coordination point for substrate. Aspartate 70 (proton acceptor) is an active-site residue. Aspartate 70 serves as a coordination point for Mg(2+). Substrate is bound by residues threonine 71, 154-157 (FGYD), lysine 177, and 182-183 (HR).

Belongs to the HAM1 NTPase family. In terms of assembly, homodimer. Mg(2+) is required as a cofactor.

It carries out the reaction XTP + H2O = XMP + diphosphate + H(+). The enzyme catalyses dITP + H2O = dIMP + diphosphate + H(+). The catalysed reaction is ITP + H2O = IMP + diphosphate + H(+). Its function is as follows. Pyrophosphatase that catalyzes the hydrolysis of nucleoside triphosphates to their monophosphate derivatives, with a high preference for the non-canonical purine nucleotides XTP (xanthosine triphosphate), dITP (deoxyinosine triphosphate) and ITP. Seems to function as a house-cleaning enzyme that removes non-canonical purine nucleotides from the nucleotide pool, thus preventing their incorporation into DNA/RNA and avoiding chromosomal lesions. The sequence is that of dITP/XTP pyrophosphatase from Chlamydia pneumoniae (Chlamydophila pneumoniae).